The chain runs to 178 residues: ATP-dependent protease subunit HslV (178 aa).

Thr-5 is an active-site residue. Positions 160, 163, and 166 each coordinate Na(+).

This sequence belongs to the peptidase T1B family. HslV subfamily. As to quaternary structure, a double ring-shaped homohexamer of HslV is capped on each side by a ring-shaped HslU homohexamer. The assembly of the HslU/HslV complex is dependent on binding of ATP.

Its subcellular location is the cytoplasm. It catalyses the reaction ATP-dependent cleavage of peptide bonds with broad specificity.. Allosterically activated by HslU binding. Functionally, protease subunit of a proteasome-like degradation complex believed to be a general protein degrading machinery. The chain is ATP-dependent protease subunit HslV from Magnetococcus marinus (strain ATCC BAA-1437 / JCM 17883 / MC-1).